A 424-amino-acid polypeptide reads, in one-letter code: WD-40 repeat-containing protein MSI3 (424 aa).

Residue methionine 1 is modified to N-acetylmethionine. WD repeat units lie at residues 167 to 207 (GHEQ…TDKV), 216 to 256 (GHQS…MQHQ), 259 to 299 (VHER…APLH), 303 to 343 (KHEG…DEQL), and 362 to 402 (GHKA…YRED). Residues 233–249 (IFGSAGDDCQLVIWDLR) carry the DWD box motif. Positions 394–424 (MAESIYREDDEDEDDDDEGNQNAQHSNENQK) are disordered. Positions 401 to 412 (EDDEDEDDDDEG) are enriched in acidic residues. Residues 413–424 (NQNAQHSNENQK) show a composition bias toward polar residues.

This sequence belongs to the WD repeat RBAP46/RBAP48/MSI1 family.

Its subcellular location is the nucleus. Its function is as follows. Core histone-binding subunit that may target chromatin assembly factors, chromatin remodeling factors and histone deacetylases to their histone substrates in a manner that is regulated by nucleosomal DNA. This chain is WD-40 repeat-containing protein MSI3 (MSI3), found in Arabidopsis thaliana (Mouse-ear cress).